Reading from the N-terminus, the 544-residue chain is 4-coumarate--CoA ligase 2 (544 aa).

Positions 190, 191, 192, 193, 194, and 198 each coordinate ATP. Residue Tyr240 participates in (E)-4-coumaroyl-AMP binding. Lys261 provides a ligand contact to CoA. An SBD1 region spans residues 263–332 (DIVPFLELIQ…AKFPNAKLGQ (70 aa)). (E)-4-coumaroyl-AMP-binding residues include Ala310, Gln332, Gly333, Thr337, and Met345. ATP contacts are provided by Gln332, Gly333, and Thr337. The interval 333–400 (GYGMTEAGPV…IRGDQIMKGY (68 aa)) is SBD2. The ATP site is built by Asp421 and Arg436. (E)-4-coumaroyl-AMP is bound by residues Lys438 and Lys442. CoA contacts are provided by Lys444 and Gly445. Lys527 contributes to the ATP binding site.

It belongs to the ATP-dependent AMP-binding enzyme family. Mg(2+) is required as a cofactor.

The catalysed reaction is (E)-4-coumarate + ATP + CoA = (E)-4-coumaroyl-CoA + AMP + diphosphate. It carries out the reaction (E)-4-coumarate + ATP + H(+) = (E)-4-coumaroyl-AMP + diphosphate. It catalyses the reaction (E)-4-coumaroyl-AMP + CoA = (E)-4-coumaroyl-CoA + AMP + H(+). It participates in phytoalexin biosynthesis; 3,4',5-trihydroxystilbene biosynthesis; 3,4',5-trihydroxystilbene from trans-4-coumarate: step 1/2. In terms of biological role, carboxylate--CoA ligase that may use 4-coumarate as substrate. Follows a two-step reaction mechanism, wherein the carboxylate substrate first undergoes adenylation by ATP, followed by a thioesterification in the presence of CoA to yield the final CoA thioester. The polypeptide is 4-coumarate--CoA ligase 2 (4CL2) (Petroselinum crispum (Parsley)).